A 417-amino-acid polypeptide reads, in one-letter code: Serine hydroxymethyltransferase (417 aa).

(6S)-5,6,7,8-tetrahydrofolate contacts are provided by residues Leu-122 and 126 to 128 (GHL). Lys-230 carries the N6-(pyridoxal phosphate)lysine modification. (6S)-5,6,7,8-tetrahydrofolate is bound at residue 355-357 (SPF).

The protein belongs to the SHMT family. As to quaternary structure, homodimer. Pyridoxal 5'-phosphate serves as cofactor.

The protein resides in the cytoplasm. It carries out the reaction (6R)-5,10-methylene-5,6,7,8-tetrahydrofolate + glycine + H2O = (6S)-5,6,7,8-tetrahydrofolate + L-serine. It participates in one-carbon metabolism; tetrahydrofolate interconversion. It functions in the pathway amino-acid biosynthesis; glycine biosynthesis; glycine from L-serine: step 1/1. Functionally, catalyzes the reversible interconversion of serine and glycine with tetrahydrofolate (THF) serving as the one-carbon carrier. This reaction serves as the major source of one-carbon groups required for the biosynthesis of purines, thymidylate, methionine, and other important biomolecules. Also exhibits THF-independent aldolase activity toward beta-hydroxyamino acids, producing glycine and aldehydes, via a retro-aldol mechanism. The chain is Serine hydroxymethyltransferase from Francisella tularensis subsp. tularensis (strain FSC 198).